Here is a 136-residue protein sequence, read N- to C-terminus: Putative pre-16S rRNA nuclease (136 aa).

The protein belongs to the YqgF nuclease family.

It is found in the cytoplasm. Its function is as follows. Could be a nuclease involved in processing of the 5'-end of pre-16S rRNA. This is Putative pre-16S rRNA nuclease from Francisella tularensis subsp. tularensis (strain FSC 198).